Here is a 481-residue protein sequence, read N- to C-terminus: Delta 4,5-hexuronate-2-O-sulfatase (481 aa).

Residue S64 is modified to 3-oxoalanine (Ser). Zn(2+) contacts are provided by C225, C226, H462, and H469. The tract at residues 453–481 (VDADPRCRNHTPGYPSHEGPGAREILKRK) is disordered. Residues 472 to 481 (PGAREILKRK) are compositionally biased toward basic and acidic residues.

Belongs to the sulfatase family. Requires Zn(2+) as cofactor. Post-translationally, the conversion to 3-oxoalanine (also known as C-formylglycine, FGly), of a serine or cysteine residue in prokaryotes and of a cysteine residue in eukaryotes, is critical for catalytic activity.

Its function is as follows. Exosulfatase involved in the degradation of the glycosaminoglycans (GAGs) chondroitin sulfate (CS), dermatan sulfate (DS) and heparan sulfate (HS). 2-O-sulfatase active on unsaturated non-reducing end hexuronate units. Has a slight preference for HS-derived structures. GAG-specific sulfatases play a key role in the persistence of the major human gut symbiont B.thetaiotaomicron in the host gastrointestinal tract. This Bacteroides thetaiotaomicron (strain ATCC 29148 / DSM 2079 / JCM 5827 / CCUG 10774 / NCTC 10582 / VPI-5482 / E50) protein is Delta 4,5-hexuronate-2-O-sulfatase.